Consider the following 172-residue polypeptide: ATP synthase subunit b (172 aa).

Residues 5–24 traverse the membrane as a helical segment; that stretch reads LLMLLLLGSVSLFANEAAAS.

This sequence belongs to the ATPase B chain family. In terms of assembly, F-type ATPases have 2 components, F(1) - the catalytic core - and F(0) - the membrane proton channel. F(1) has five subunits: alpha(3), beta(3), gamma(1), delta(1), epsilon(1). F(0) has three main subunits: a(1), b(2) and c(10-14). The alpha and beta chains form an alternating ring which encloses part of the gamma chain. F(1) is attached to F(0) by a central stalk formed by the gamma and epsilon chains, while a peripheral stalk is formed by the delta and b chains.

The protein resides in the cell inner membrane. F(1)F(0) ATP synthase produces ATP from ADP in the presence of a proton or sodium gradient. F-type ATPases consist of two structural domains, F(1) containing the extramembraneous catalytic core and F(0) containing the membrane proton channel, linked together by a central stalk and a peripheral stalk. During catalysis, ATP synthesis in the catalytic domain of F(1) is coupled via a rotary mechanism of the central stalk subunits to proton translocation. In terms of biological role, component of the F(0) channel, it forms part of the peripheral stalk, linking F(1) to F(0). The polypeptide is ATP synthase subunit b (Nitratiruptor sp. (strain SB155-2)).